A 70-amino-acid chain; its full sequence is MFTLKKSLLLLFFLGTINLSLCEEERNAEEERRDDPEERDVEVEKRFFPAILRVAAKVGPAVLCAITKKC.

A signal peptide spans 1 to 22; it reads MFTLKKSLLLLFFLGTINLSLC. The propeptide occupies 23–44; sequence EEERNAEEERRDDPEERDVEVE. A disulfide bond links cysteine 64 and cysteine 70.

Belongs to the frog skin active peptide (FSAP) family. Brevinin subfamily. In terms of tissue distribution, expressed by the skin glands.

It localises to the secreted. Functionally, antimicrobial peptide. The polypeptide is Brevinin-1S (Odorrana schmackeri (Schmacker's frog)).